We begin with the raw amino-acid sequence, 347 residues long: Heme A synthase (347 aa).

The next 8 helical transmembrane spans lie at 14–34 (VKVW…VGGI), 95–115 (YFHR…FLYF), 125–145 (LIVN…MGWL), 166–186 (LLLA…AVIL), 198–218 (LIFY…SLVA), 260–280 (FIHE…LLIL), 289–309 (LLLV…IYNV), and 311–331 (IALA…NTYL). H262 is a binding site for heme. H317 contributes to the heme binding site.

This sequence belongs to the COX15/CtaA family. Type 2 subfamily. In terms of assembly, interacts with CtaB. Requires heme b as cofactor.

It localises to the cell membrane. It carries out the reaction Fe(II)-heme o + 2 A + H2O = Fe(II)-heme a + 2 AH2. Its pathway is porphyrin-containing compound metabolism; heme A biosynthesis; heme A from heme O: step 1/1. In terms of biological role, catalyzes the conversion of heme O to heme A by two successive hydroxylations of the methyl group at C8. The first hydroxylation forms heme I, the second hydroxylation results in an unstable dihydroxymethyl group, which spontaneously dehydrates, resulting in the formyl group of heme A. The sequence is that of Heme A synthase from Ehrlichia canis (strain Jake).